A 591-amino-acid polypeptide reads, in one-letter code: MAERTHACGKVTVEAVGQTVQLKGWVQKRRDLGGLIFIDLRDRTGIVQVVFNPETSKEALEVAETIRSEYVLHVEGTVVERGEGAINDNMATGRIEVQATKVNVLNAAKTTPIIIADDTDASEDVRLKYRYLDLRRPVMFNTFKMRHDVTKTIRNFLDTEEFLEVETPILTKSTPEGARDYLVPSRVHDGEFYALPQSPQLFKQLLMVGGFERYYQVARCFRDEDLRADRQPEFTQIDIEASFLTQDEILDMMERMMTKVMKDAKGVEVSAPFPRMKYADAMARYGSDKPDTRFEMELTDLSEFAAGCGFKVFTSAVESGGQVKAINAKGAASKYSRKDIDALTEFVKVYGAKGLAWLKVEEDGLKGPIAKFFGEEDANVLMSTLEATAGDLLLFVADKKSVVADSLGALRLRLGKELELIDESKFNFLWVTDWPLLEYDEDADRYFAAHHPFTMPFREDVELLETAPEKARAQAYDLVLNGYELGGGSLRIYERDVQEKMFKALGFSQEEAQEQFGFLLEAFEYGTPPHGGIALGLDRLVMLLAGRTNLRDTIAFPKTASASCLLTEAPSPVAEAQLEELNLKLSLKEEK.

Position 176 (E176) interacts with L-aspartate. Residues 200–203 (QLFK) form an aspartate region. Residue R222 coordinates L-aspartate. ATP-binding positions include 222-224 (RDE) and Q231. H450 contacts L-aspartate. E484 contributes to the ATP binding site. R491 contacts L-aspartate. An ATP-binding site is contributed by 536–539 (GLDR).

It belongs to the class-II aminoacyl-tRNA synthetase family. Type 1 subfamily. As to quaternary structure, homodimer.

The protein resides in the cytoplasm. The enzyme catalyses tRNA(Asx) + L-aspartate + ATP = L-aspartyl-tRNA(Asx) + AMP + diphosphate. Its function is as follows. Aspartyl-tRNA synthetase with relaxed tRNA specificity since it is able to aspartylate not only its cognate tRNA(Asp) but also tRNA(Asn). Reaction proceeds in two steps: L-aspartate is first activated by ATP to form Asp-AMP and then transferred to the acceptor end of tRNA(Asp/Asn). This Bacillus cereus (strain B4264) protein is Aspartate--tRNA(Asp/Asn) ligase.